A 599-amino-acid chain; its full sequence is PR domain zinc finger protein 5 (599 aa).

An SET domain is found at 8-124; it reads DRFALKSSRV…TDTELLIGYL (117 aa). C2H2-type zinc fingers lie at residues 167-190, 199-221, 231-256, 264-286, 289-311, 317-339, 345-367, 373-395, 401-424, 430-452, 458-480, and 486-508; these read FACP…QSLH, FKCE…FEQH, FVCK…ENVH, LICS…RKIH, FDCQ…MITH, YNCE…KVIH, YQCK…KKTH, FQCD…LLIH, FKCH…QVVH, YRCE…KKTH, KVCP…IRSH, and YQCP…IRTH. Residues 514–536 form a C2H2-type 13; degenerate zinc finger; the sequence is YQCSECSKAFSQKRGLDEHKRTH. 2 consecutive C2H2-type zinc fingers follow at residues 542–564 and 571–594; these read FQCD…KMTH and AECH…DNIH.

Belongs to the class V-like SAM-binding methyltransferase superfamily. As to quaternary structure, interacts with EHMT2/G9A, GFI1 and HDAC1.

The protein resides in the nucleus. In terms of biological role, sequence-specific DNA-binding transcription factor. Represses transcription at least in part by recruitment of the histone methyltransferase EHMT2/G9A and histone deacetylases such as HDAC1. Regulates hematopoiesis-associated protein-coding and microRNA (miRNA) genes. May regulate the expression of proteins involved in extracellular matrix development and maintenance, connective tissue components and molecules regulating cell migration and adhesion. May cause G2/M arrest and apoptosis in cancer cells. The polypeptide is PR domain zinc finger protein 5 (Prdm5) (Mus musculus (Mouse)).